The following is a 122-amino-acid chain: Mth938 domain-containing protein (122 aa).

The interval I6–C122 is MTH138-like domain.

It belongs to the AAMDC family.

It localises to the cytoplasm. In terms of biological role, may play a role in preadipocyte differentiation and adipogenesis. This Bos taurus (Bovine) protein is Mth938 domain-containing protein (AAMDC).